Here is a 306-residue protein sequence, read N- to C-terminus: Lipid A biosynthesis palmitoleoyltransferase (306 aa).

The helical transmembrane segment at 20–40 (WFGLGVLWLWVQLPYPVLCFL) threads the bilayer. The short motif at 132–137 (HFMSLE) is the HXXXXD motif element.

It belongs to the LpxL/LpxM/LpxP family. LpxP subfamily.

Its subcellular location is the cell inner membrane. The enzyme catalyses (9Z)-hexadecenoyl-[ACP] + alpha-Kdo-(2-&gt;4)-alpha-Kdo-(2-&gt;6)-lipid IVA (E. coli) = (9Z)-hexadecenoyl-(Kdo)2-lipid IVA (E. coli) + holo-[ACP]. Its pathway is bacterial outer membrane biogenesis; lipopolysaccharide biosynthesis. In terms of biological role, catalyzes the transfer of palmitoleate from palmitoleoyl-[acyl-carrier-protein] (ACP) to Kdo(2)-lipid IV(A) to form Kdo(2)-(palmitoleoyl)-lipid IV(A). Required for the biosynthesis of a distinct molecular species of lipid A, which is present only in cells grown at low temperatures. It may confer a selective advantage to cells growing at lower temperatures by making the outer membrane a more effective barrier to harmful chemicals. The protein is Lipid A biosynthesis palmitoleoyltransferase of Escherichia coli (strain K12).